Reading from the N-terminus, the 564-residue chain is Proline--tRNA ligase (564 aa).

This sequence belongs to the class-II aminoacyl-tRNA synthetase family. ProS type 1 subfamily. Homodimer.

Its subcellular location is the cytoplasm. The enzyme catalyses tRNA(Pro) + L-proline + ATP = L-prolyl-tRNA(Pro) + AMP + diphosphate. Its function is as follows. Catalyzes the attachment of proline to tRNA(Pro) in a two-step reaction: proline is first activated by ATP to form Pro-AMP and then transferred to the acceptor end of tRNA(Pro). As ProRS can inadvertently accommodate and process non-cognate amino acids such as alanine and cysteine, to avoid such errors it has two additional distinct editing activities against alanine. One activity is designated as 'pretransfer' editing and involves the tRNA(Pro)-independent hydrolysis of activated Ala-AMP. The other activity is designated 'posttransfer' editing and involves deacylation of mischarged Ala-tRNA(Pro). The misacylated Cys-tRNA(Pro) is not edited by ProRS. This Coxiella burnetii (strain Dugway 5J108-111) protein is Proline--tRNA ligase.